The sequence spans 1830 residues: Guanine nucleotide exchange factor SPIKE 1 (1830 aa).

Residue Met1 is modified to N-acetylmethionine. A disordered region spans residues 285–304; it reads NTGESASPSSPLAPSMTASS. Residues 289 to 304 show a composition bias toward low complexity; it reads SASPSSPLAPSMTASS. Residues 463-622 form the C2 DOCK-type domain; that stretch reads FHCLYVYPVA…NIFKLRLRLC (160 aa). Residue Ser1051 is modified to Phosphoserine. Position 1079 is a phosphothreonine (Thr1079). Ser1095 carries the phosphoserine modification. Residues 1379–1828 form the DOCKER domain; the sequence is MAFAPVPDLH…LSHYIPAILS (450 aa).

This sequence belongs to the DOCK family. As to quaternary structure, homodimer. Component of SCAR/WAVE and ARP2/3 complexes. Interacts directly with ARAC4/ROP2, ARAC1/ROP3, ARAC5/ROP4, ARAC6/ROP5, ARAC8/ROP10, ARAC9/ROP8, SCAR1, SCAR2, SCAR3, SCAR4, ABI1, ABI2, ABI3 and ABI4. Binds to the inactive GDP-bound form of ARAC3/ROP6. Expressed ubiquitously, in roots and aerial organs.

The protein resides in the cytoplasm. Its subcellular location is the endoplasmic reticulum membrane. It is found in the nucleus. Functionally, guanine nucleotide exchange factor (GEF) for Rho and Rac. GEF proteins activate small GTPases by exchanging bound GDP for free GTP. Controls actin polymerization via the two heteromeric complexes WAVE and actin-related protein (ARP) 2/3. Involved in cytoskeletal reorganization required for cell shape (e.g. trichome and cotyledon) control and tissue development. Prevents cortical microtubules organization into parallel arrays oriented perpendicular to the axis of cell elongation to limit anisotropic cell growth during petal development, probably by triggering ARAC4/ROP2 and ARAC3/ROP6 activity. Promotes polarized growth and cell-cell adhesion in the leaf epidermis probably by promoting the formation of endoplasmic reticulum (ER) exit site (ERES) and/or trafficking between the ER and Golgi. Triggers ARAC3/ROP6 activation required for auxin-mediated inhibition of PIN2 internalization during gravitropic responses (, PubMed:22683260). This is Guanine nucleotide exchange factor SPIKE 1 from Arabidopsis thaliana (Mouse-ear cress).